The following is a 471-amino-acid chain: Citrate synthase, mitochondrial (471 aa).

Residues histidine 309, histidine 355, and aspartate 409 contribute to the active site.

It belongs to the citrate synthase family. Homodimer. Ubiquitous.

Its subcellular location is the mitochondrion matrix. The catalysed reaction is oxaloacetate + acetyl-CoA + H2O = citrate + CoA + H(+). It functions in the pathway carbohydrate metabolism; tricarboxylic acid cycle; isocitrate from oxaloacetate: step 1/2. In Solanum tuberosum (Potato), this protein is Citrate synthase, mitochondrial.